A 504-amino-acid polypeptide reads, in one-letter code: GTPase Der (504 aa).

The EngA-type G 1 domain maps to 4 to 168; sequence PVVALVGRPN…QVLAPFAEKM (165 aa). GTP contacts are provided by residues 10–17, 57–61, and 120–123; these read GRPNVGKS, DTGGI, and NKTD. The span at 168–179 shows a compositional bias: basic and acidic residues; it reads MENADENDRTSE. The disordered stretch occupies residues 168 to 191; the sequence is MENADENDRTSEEEQDEWEQEFDF. Positions 180–191 are enriched in acidic residues; it reads EEQDEWEQEFDF. Residues 216 to 389 enclose the EngA-type G 2 domain; the sequence is IKIAIVGRPN…SIKEAYACAT (174 aa). GTP contacts are provided by residues 222-229, 269-273, and 334-337; these read GRPNVGKS, DTAGV, and NKWD. One can recognise a KH-like domain in the interval 390–474; the sequence is QKMTTSLLTR…PIRLLFQEGS (85 aa).

It belongs to the TRAFAC class TrmE-Era-EngA-EngB-Septin-like GTPase superfamily. EngA (Der) GTPase family. As to quaternary structure, associates with the 50S ribosomal subunit.

Functionally, GTPase that plays an essential role in the late steps of ribosome biogenesis. In Haemophilus influenzae (strain ATCC 51907 / DSM 11121 / KW20 / Rd), this protein is GTPase Der.